We begin with the raw amino-acid sequence, 1050 residues long: ATP-dependent DNA helicase MPH1 (1050 aa).

The 168-residue stretch at 95 to 262 (IVQRAFYHNL…EIIDNLNISK (168 aa)) folds into the Helicase ATP-binding domain. 108 to 115 (LPTGLGKT) lines the ATP pocket. Positions 210 to 213 (DEAH) match the DEAH box motif. The Helicase C-terminal domain maps to 431 to 631 (KIEAMMEELD…LIDLKEQNRM (201 aa)). Disordered regions lie at residues 493 to 524 (DESNFGKKSKGKRVGKKQQDDSKSSSENAQIN) and 743 to 821 (DSDE…PPKR). Residues 499 to 508 (KKSKGKRVGK) show a composition bias toward basic residues. Positions 786-799 (RTLDQHHSASEERG) are enriched in basic and acidic residues. Residues 800 to 810 (INSNFSHESNL) are compositionally biased toward polar residues.

The protein belongs to the DEAD box helicase family. DEAH subfamily. FANCM sub-subfamily. As to quaternary structure, interacts with the MHF histone-fold complex to form the FANCM-MHF complex.

The protein resides in the nucleus. The enzyme catalyses ATP + H2O = ADP + phosphate + H(+). ATP-dependent DNA helicase involved in DNA damage repair by homologous recombination and in genome maintenance. Capable of unwinding D-loops. Plays a role in limiting crossover recombinants during mitotic DNA double-strand break (DSB) repair. Component of a FANCM-MHF complex which promotes gene conversion at blocked replication forks, probably by reversal of the stalled fork. The chain is ATP-dependent DNA helicase MPH1 from Scheffersomyces stipitis (strain ATCC 58785 / CBS 6054 / NBRC 10063 / NRRL Y-11545) (Yeast).